The chain runs to 71 residues: Conotoxin Lt11.3 (71 aa).

An N-terminal signal peptide occupies residues 1–26; the sequence is MMFRLTSVGCILLVIAFLNLVGLTNA. Disulfide bonds link C27/C41, C34/C46, C40/C50, and C45/C54. Proline amide is present on P57. Residues 61–71 constitute a propeptide that is removed on maturation; that stretch reads TRLQGFFKHRR.

It belongs to the conotoxin I2 superfamily. As to expression, expressed by the venom duct.

It localises to the secreted. In terms of biological role, probable neurotoxin. This is Conotoxin Lt11.3 from Conus litteratus (Lettered cone).